We begin with the raw amino-acid sequence, 144 residues long: Kunitz-type elastase inhibitor BrEI (144 aa).

An N-linked (GlcNAc...) asparagine glycan is attached at N38. A disulfide bridge connects residues C41 and C88.

The protein belongs to the leguminous Kunitz-type inhibitor family.

Functionally, inhibitor of porcine pancreatic elastase with a Ki of 27 nM. Does not inhibit human neutrophil elastase, bovine trypsin, human plasma kallikrein or porcine pancreatic kallikrein. The polypeptide is Kunitz-type elastase inhibitor BrEI (Bauhinia rufa (Orchid tree)).